The following is a 253-amino-acid chain: Discoidin-1 subunit B/C (253 aa).

Residue serine 2 is modified to N-acetylserine. Residues 2 to 152 form the F5/8 type C domain; it reads STQGLVQLIS…ISLRCEFYTQ (151 aa). The short motif at 79–81 is the Cell attachment site element; the sequence is RGD.

Tetramer of four different chains (A to D). Stalk cells.

The protein resides in the cytoplasm. Its function is as follows. Galactose- and N-acetylgalactosamine-binding lectin. May play a role in cell-substratum adhesion rather than in cell-cell adhesion. May be necessary for the maintenance of normal elongate morphology during aggregation. The polypeptide is Discoidin-1 subunit B/C (dscC-1) (Dictyostelium discoideum (Social amoeba)).